Reading from the N-terminus, the 177-residue chain is Large ribosomal subunit protein uL6 (177 aa).

Belongs to the universal ribosomal protein uL6 family. Part of the 50S ribosomal subunit.

Functionally, this protein binds to the 23S rRNA, and is important in its secondary structure. It is located near the subunit interface in the base of the L7/L12 stalk, and near the tRNA binding site of the peptidyltransferase center. The protein is Large ribosomal subunit protein uL6 of Sinorhizobium medicae (strain WSM419) (Ensifer medicae).